A 440-amino-acid chain; its full sequence is uncharacterized protein (440 aa).

The signal sequence occupies residues 1 to 19; the sequence is MKKLLLAASIIYFASVSLA.

This is an uncharacterized protein from Rickettsia typhi (strain ATCC VR-144 / Wilmington).